A 286-amino-acid polypeptide reads, in one-letter code: ATP synthase gamma chain (286 aa).

This sequence belongs to the ATPase gamma chain family. As to quaternary structure, F-type ATPases have 2 components, CF(1) - the catalytic core - and CF(0) - the membrane proton channel. CF(1) has five subunits: alpha(3), beta(3), gamma(1), delta(1), epsilon(1). CF(0) has three main subunits: a, b and c.

It localises to the cell membrane. In terms of biological role, produces ATP from ADP in the presence of a proton gradient across the membrane. The gamma chain is believed to be important in regulating ATPase activity and the flow of protons through the CF(0) complex. This chain is ATP synthase gamma chain, found in Ureaplasma parvum serovar 3 (strain ATCC 27815 / 27 / NCTC 11736).